The sequence spans 184 residues: Isopentenyl-diphosphate Delta-isomerase (184 aa).

Mn(2+) is bound by residues His-26 and His-33. Positions 31-165 constitute a Nudix hydrolase domain; it reads PLHLAFSCYL…PSAFSPWLGL (135 aa). The active site involves Cys-68. Position 70 (His-70) interacts with Mn(2+). Glu-88 is a Mg(2+) binding site. Glu-115 and Glu-117 together coordinate Mn(2+). Glu-117 is an active-site residue.

It belongs to the IPP isomerase type 1 family. Mg(2+) is required as a cofactor. Requires Mn(2+) as cofactor.

It localises to the cytoplasm. The enzyme catalyses isopentenyl diphosphate = dimethylallyl diphosphate. It functions in the pathway isoprenoid biosynthesis; dimethylallyl diphosphate biosynthesis; dimethylallyl diphosphate from isopentenyl diphosphate: step 1/1. In terms of biological role, catalyzes the 1,3-allylic rearrangement of the homoallylic substrate isopentenyl (IPP) to its highly electrophilic allylic isomer, dimethylallyl diphosphate (DMAPP). The chain is Isopentenyl-diphosphate Delta-isomerase from Paenarthrobacter aurescens (strain TC1).